The chain runs to 339 residues: Proto-oncogene serine/threonine-protein kinase mos (339 aa).

The Protein kinase domain maps to 61–335; that stretch reads VCLLHRLGSG…LLQKDLKAFR (275 aa). ATP-binding positions include 67-75 and lysine 88; that span reads LGSGGFGSV. The active-site Proton acceptor is aspartate 196.

The protein belongs to the protein kinase superfamily. Ser/Thr protein kinase family. Interacts with MAP2K1/MEK1. Expressed mainly in gonadal tissues, and cardiac and skeletal muscles.

Its subcellular location is the cytoplasm. It catalyses the reaction L-seryl-[protein] + ATP = O-phospho-L-seryl-[protein] + ADP + H(+). The enzyme catalyses L-threonyl-[protein] + ATP = O-phospho-L-threonyl-[protein] + ADP + H(+). Functionally, serine/threonine kinase involved in the regulation of MAPK signaling. Is an activator of the ERK1/2 signaling cascade playing an essential role in the stimulation of oocyte maturation. In Rattus norvegicus (Rat), this protein is Proto-oncogene serine/threonine-protein kinase mos.